The sequence spans 320 residues: L-lactate dehydrogenase 2 (320 aa).

Residues 18–19, D40, and R45 contribute to the NAD(+) site; that span reads AV. Residues Q88, R94, and 126–129 contribute to the substrate site; that span reads NPVD. NAD(+) contacts are provided by residues 124-126 and S149; that span reads ITN. Residue 154 to 157 participates in substrate binding; that stretch reads DSAR. Beta-D-fructose 1,6-bisphosphate is bound by residues R159 and 171–176; that span reads KNVHAY. The active-site Proton acceptor is the H181. At Y228 the chain carries Phosphotyrosine. Residue T237 participates in substrate binding.

Belongs to the LDH/MDH superfamily. LDH family. As to quaternary structure, homotetramer.

The protein resides in the cytoplasm. The enzyme catalyses (S)-lactate + NAD(+) = pyruvate + NADH + H(+). It participates in fermentation; pyruvate fermentation to lactate; (S)-lactate from pyruvate: step 1/1. Its activity is regulated as follows. Allosterically activated by fructose 1,6-bisphosphate (FBP). Catalyzes the conversion of lactate to pyruvate. The sequence is that of L-lactate dehydrogenase 2 from Bifidobacterium longum subsp. longum (strain ATCC 15707 / DSM 20219 / JCM 1217 / NCTC 11818 / E194b).